Reading from the N-terminus, the 349-residue chain is MSKIRVLSVDDSALMRQIMTEIINSHSDMEMVATAPDPLVARDLIKKFNPDVLTLDVEMPRMDGLDFLEKLMRLRPMPVVMVSSLTGKGSEVTLRALELGAIDFVTKPQLGIREGMLAYSEMIAEKVRTAARARIAAHKPMAAPTTLKAGPLLSSEKLIAIGASTGGTEAIRHVLQPLPLSSPAVIITQHMPPGFTRSFAERLNKLCQISVKEAEDGELVLPGHAYIAPGDKHMELARSGANYQIKIHDGPPVNRHRPSVDVLFHSVAKHAGRNAVGVILTGMGNDGAAGMLAMYQAGAWTIAQNEASCVVFGMPREAINMGGVSEVVDLSQVSQQMLAKISAGQAIRI.

Residues 5-122 form the Response regulatory domain; it reads RVLSVDDSAL…REGMLAYSEM (118 aa). Asp-56 carries the post-translational modification 4-aspartylphosphate. The CheB-type methylesterase domain occupies 152 to 344; that stretch reads LLSSEKLIAI…QQMLAKISAG (193 aa). Residues Ser-164, His-190, and Asp-286 contribute to the active site.

Belongs to the CheB family. In terms of processing, phosphorylated by CheA. Phosphorylation of the N-terminal regulatory domain activates the methylesterase activity.

Its subcellular location is the cytoplasm. It carries out the reaction [protein]-L-glutamate 5-O-methyl ester + H2O = L-glutamyl-[protein] + methanol + H(+). The catalysed reaction is L-glutaminyl-[protein] + H2O = L-glutamyl-[protein] + NH4(+). In terms of biological role, involved in chemotaxis. Part of a chemotaxis signal transduction system that modulates chemotaxis in response to various stimuli. Catalyzes the demethylation of specific methylglutamate residues introduced into the chemoreceptors (methyl-accepting chemotaxis proteins or MCP) by CheR. Also mediates the irreversible deamidation of specific glutamine residues to glutamic acid. The chain is Protein-glutamate methylesterase/protein-glutamine glutaminase from Salmonella typhi.